The primary structure comprises 972 residues: N-alpha-acetyltransferase 25, NatB auxiliary subunit (972 aa).

TPR repeat units follow at residues 11–44 (NDRR…HKDL), 45–78 (HCAK…EPTD), 79–112 (DNSL…VPNS), and 114–146 (EYHS…VPKN).

The protein belongs to the MDM20/NAA25 family. Component of the N-terminal acetyltransferase B (NatB) complex which is composed of NAA20 and NAA25.

It localises to the cytoplasm. Non-catalytic subunit of the NatB complex which catalyzes acetylation of the N-terminal methionine residues of peptides beginning with Met-Asp, Met-Glu, Met-Asn and Met-Gln. May play a role in normal cell-cycle progression. This is N-alpha-acetyltransferase 25, NatB auxiliary subunit (Naa25) from Mus musculus (Mouse).